We begin with the raw amino-acid sequence, 207 residues long: Protein GrpE (207 aa).

Composition is skewed to basic and acidic residues over residues 1-11 and 57-66; these read MEENRDVKNEE and DLVKNQEEEN. The disordered stretch occupies residues 1-66; it reads MEENRDVKNE…DLVKNQEEEN (66 aa).

The protein belongs to the GrpE family. In terms of assembly, homodimer.

The protein resides in the cytoplasm. Functionally, participates actively in the response to hyperosmotic and heat shock by preventing the aggregation of stress-denatured proteins, in association with DnaK and GrpE. It is the nucleotide exchange factor for DnaK and may function as a thermosensor. Unfolded proteins bind initially to DnaJ; upon interaction with the DnaJ-bound protein, DnaK hydrolyzes its bound ATP, resulting in the formation of a stable complex. GrpE releases ADP from DnaK; ATP binding to DnaK triggers the release of the substrate protein, thus completing the reaction cycle. Several rounds of ATP-dependent interactions between DnaJ, DnaK and GrpE are required for fully efficient folding. The polypeptide is Protein GrpE (Clostridium beijerinckii (strain ATCC 51743 / NCIMB 8052) (Clostridium acetobutylicum)).